The primary structure comprises 429 residues: 3-phosphoshikimate 1-carboxyvinyltransferase (429 aa).

3-phosphoshikimate-binding residues include Lys23, Ser24, and Arg28. Lys23 serves as a coordination point for phosphoenolpyruvate. Phosphoenolpyruvate contacts are provided by Gly95 and Arg123. Ser168, Gln170, Asp316, and Lys343 together coordinate 3-phosphoshikimate. Gln170 is a binding site for phosphoenolpyruvate. Residue Asp316 is the Proton acceptor of the active site. Arg347 and Arg389 together coordinate phosphoenolpyruvate.

It belongs to the EPSP synthase family. As to quaternary structure, monomer.

It localises to the cytoplasm. The enzyme catalyses 3-phosphoshikimate + phosphoenolpyruvate = 5-O-(1-carboxyvinyl)-3-phosphoshikimate + phosphate. Its pathway is metabolic intermediate biosynthesis; chorismate biosynthesis; chorismate from D-erythrose 4-phosphate and phosphoenolpyruvate: step 6/7. Its function is as follows. Catalyzes the transfer of the enolpyruvyl moiety of phosphoenolpyruvate (PEP) to the 5-hydroxyl of shikimate-3-phosphate (S3P) to produce enolpyruvyl shikimate-3-phosphate and inorganic phosphate. The sequence is that of 3-phosphoshikimate 1-carboxyvinyltransferase from Oceanobacillus iheyensis (strain DSM 14371 / CIP 107618 / JCM 11309 / KCTC 3954 / HTE831).